We begin with the raw amino-acid sequence, 132 residues long: Ribosome-binding factor A (132 aa).

It belongs to the RbfA family. In terms of assembly, monomer. Binds 30S ribosomal subunits, but not 50S ribosomal subunits or 70S ribosomes.

It localises to the cytoplasm. One of several proteins that assist in the late maturation steps of the functional core of the 30S ribosomal subunit. Associates with free 30S ribosomal subunits (but not with 30S subunits that are part of 70S ribosomes or polysomes). Required for efficient processing of 16S rRNA. May interact with the 5'-terminal helix region of 16S rRNA. In Pseudomonas putida (strain W619), this protein is Ribosome-binding factor A.